A 73-amino-acid chain; its full sequence is Translational regulator CsrA (73 aa).

This sequence belongs to the CsrA/RsmA family. As to quaternary structure, homodimer; the beta-strands of each monomer intercalate to form a hydrophobic core, while the alpha-helices form wings that extend away from the core.

The protein resides in the cytoplasm. Its function is as follows. A translational regulator that binds mRNA to regulate translation initiation and/or mRNA stability. Usually binds in the 5'-UTR at or near the Shine-Dalgarno sequence preventing ribosome-binding, thus repressing translation. Its main target seems to be the major flagellin gene, while its function is anatagonized by FliW. This chain is Translational regulator CsrA, found in Clostridium acetobutylicum (strain ATCC 824 / DSM 792 / JCM 1419 / IAM 19013 / LMG 5710 / NBRC 13948 / NRRL B-527 / VKM B-1787 / 2291 / W).